The chain runs to 89 residues: Small ribosomal subunit protein uS15 (89 aa).

This sequence belongs to the universal ribosomal protein uS15 family. In terms of assembly, part of the 30S ribosomal subunit. Forms a bridge to the 50S subunit in the 70S ribosome, contacting the 23S rRNA.

One of the primary rRNA binding proteins, it binds directly to 16S rRNA where it helps nucleate assembly of the platform of the 30S subunit by binding and bridging several RNA helices of the 16S rRNA. In terms of biological role, forms an intersubunit bridge (bridge B4) with the 23S rRNA of the 50S subunit in the ribosome. The chain is Small ribosomal subunit protein uS15 from Oleidesulfovibrio alaskensis (strain ATCC BAA-1058 / DSM 17464 / G20) (Desulfovibrio alaskensis).